We begin with the raw amino-acid sequence, 516 residues long: Acyl-lipid (7-3)-desaturase, chloroplastic (516 aa).

Positions 1-25 (MNATMQRSAVAGRTSGKVATTARAS) are disordered. The transit peptide at 1–47 (MNATMQRSAVAGRTSGKVATTARASSMARPRLPIAGRVARRSAVTVR) directs the protein to the chloroplast. The Cytochrome b5 heme-binding domain occupies 83–148 (WTVYRGVAYD…LADFPVDAVP (66 aa)). Heme contacts are provided by histidine 100 and histidine 123. Transmembrane regions (helical) follow at residues 186–206 (GAAFAVLGYAAAMYALYTYDA) and 209–229 (LTGALLGLGGAWIGLTIQHCG). The Histidine box-1 signature appears at 227–231 (HCGNH). Positions 262–267 (HQVSHH) match the Histidine box-2 motif. Transmembrane regions (helical) follow at residues 305 to 325 (MWALFPFLQLVFQIGDWQALL), 354 to 374 (FLLYGLPAFLHGPTAMLGGAA), 375 to 395 (GYLFTQSIVLAATFAVSHNVP), and 423 to 443 (VLTSANWGGVIGNFFTGGLNL). The Histidine box-3 signature appears at 444–448 (QIEHH).

The protein belongs to the fatty acid desaturase type 1 family. Fe(2+) is required as a cofactor.

It localises to the plastid. It is found in the chloroplast membrane. The enzyme catalyses a (7Z,10Z,13Z,16Z,19Z)-docosapentaenoyl-containing glycerolipid + 2 Fe(II)-[cytochrome b5] + O2 + 2 H(+) = a (4Z,7Z,10Z,13Z,16Z,19Z)-docosahexaenoyl-containing glycerolipid + 2 Fe(III)-[cytochrome b5] + 2 H2O. It catalyses the reaction a (7Z,10Z,13Z,16Z)-docosatetraenoyl-containing glycerolipid + 2 Fe(II)-[cytochrome b5] + O2 + 2 H(+) = a (4Z,7Z,10Z,13Z,16Z)-docosapentaenoyl-containing glycerolipid + 2 Fe(III)-[cytochrome b5] + 2 H2O. In terms of biological role, fatty acid desaturase that introduces a cis double bond at the 4-position in 16-carbon polyunsaturated fatty acids that contain a Delta(7) double bond, resulting in the production of 16 carbon fatty acid (7Z,10Z,13Z)-hexadeca-7,10,13-trienoate. This chain is Acyl-lipid (7-3)-desaturase, chloroplastic, found in Chlamydomonas reinhardtii (Chlamydomonas smithii).